The primary structure comprises 81 residues: Acyl carrier protein (81 aa).

In terms of domain architecture, Carrier spans 4–79; the sequence is SEILEKVKAI…DVLDFINNKV (76 aa). O-(pantetheine 4'-phosphoryl)serine is present on serine 39.

The protein belongs to the acyl carrier protein (ACP) family. 4'-phosphopantetheine is transferred from CoA to a specific serine of apo-ACP by AcpS. This modification is essential for activity because fatty acids are bound in thioester linkage to the sulfhydryl of the prosthetic group.

The protein localises to the cytoplasm. It participates in lipid metabolism; fatty acid biosynthesis. Carrier of the growing fatty acid chain in fatty acid biosynthesis. The protein is Acyl carrier protein of Thermosynechococcus vestitus (strain NIES-2133 / IAM M-273 / BP-1).